We begin with the raw amino-acid sequence, 186 residues long: Small ribosomal subunit protein uS5 (186 aa).

One can recognise an S5 DRBM domain in the interval 20 to 83; that stretch reads FVDKLVHINR…EAAKRDMIFV (64 aa).

The protein belongs to the universal ribosomal protein uS5 family. Part of the 30S ribosomal subunit. Contacts proteins S4 and S8.

Functionally, with S4 and S12 plays an important role in translational accuracy. Its function is as follows. Located at the back of the 30S subunit body where it stabilizes the conformation of the head with respect to the body. The polypeptide is Small ribosomal subunit protein uS5 (Brucella abortus (strain S19)).